The chain runs to 86 residues: Large ribosomal subunit protein uL23 (86 aa).

Belongs to the universal ribosomal protein uL23 family. In terms of assembly, part of the 50S ribosomal subunit. Contacts protein L29.

Functionally, binds to 23S rRNA. One of the proteins that surrounds the polypeptide exit tunnel on the outside of the ribosome. This Thermococcus gammatolerans (strain DSM 15229 / JCM 11827 / EJ3) protein is Large ribosomal subunit protein uL23.